A 390-amino-acid polypeptide reads, in one-letter code: Chorismate synthase (390 aa).

NADP(+) contacts are provided by Arg48 and Arg54. Residues 132 to 134, 244 to 245, Gly289, 304 to 308, and Arg330 each bind FMN; these read RSS, NA, and KPTSS. A disordered region spans residues 362–390; the sequence is VGAHPAGAHPAGADPAGTHPGGPGGFQPG. Over residues 363 to 379 the composition is skewed to low complexity; the sequence is GAHPAGAHPAGADPAGT. Residues 380-390 show a composition bias toward gly residues; that stretch reads HPGGPGGFQPG.

The protein belongs to the chorismate synthase family. In terms of assembly, homotetramer. Requires FMNH2 as cofactor.

It catalyses the reaction 5-O-(1-carboxyvinyl)-3-phosphoshikimate = chorismate + phosphate. It functions in the pathway metabolic intermediate biosynthesis; chorismate biosynthesis; chorismate from D-erythrose 4-phosphate and phosphoenolpyruvate: step 7/7. Functionally, catalyzes the anti-1,4-elimination of the C-3 phosphate and the C-6 proR hydrogen from 5-enolpyruvylshikimate-3-phosphate (EPSP) to yield chorismate, which is the branch point compound that serves as the starting substrate for the three terminal pathways of aromatic amino acid biosynthesis. This reaction introduces a second double bond into the aromatic ring system. This chain is Chorismate synthase, found in Methylobacterium sp. (strain 4-46).